We begin with the raw amino-acid sequence, 371 residues long: Vasopressin V2 receptor (371 aa).

Residues 1–30 (MLMASTTSAVPGHPSLPSLPSNSSQERPLD) form a disordered region. Topologically, residues 1–38 (MLMASTTSAVPGHPSLPSLPSNSSQERPLDTRDPLLAR) are extracellular. Residues 15 to 24 (SLPSLPSNSS) are compositionally biased toward low complexity. N-linked (GlcNAc...) asparagine glycosylation is present at Asn-22. Residues 39–63 (AELALLSIVFVAVALSNGLVLAALA) form a helical membrane-spanning segment. Residues 64–77 (RRGRRGHWAPIHVF) lie on the Cytoplasmic side of the membrane. The chain crosses the membrane as a helical span at residues 78–98 (IGHLCLADLAVALFQVLPQLA). At 99–113 (WKATDRFRGPDALCR) the chain is on the extracellular side. A helical transmembrane segment spans residues 114-135 (AVKYLQMVGMYASSYMILAMTL). Residues 136–159 (DRHRAICRPMLAYRHGSGAHWNRP) lie on the Cytoplasmic side of the membrane. A helical transmembrane segment spans residues 160-180 (VLVAWAFSLLLSLPQLFIFAQ). The Extracellular segment spans residues 181–200 (RNVEGGSGVTDCWACFAEPW). Residues 201-220 (GRRTYVTWIALMVFVAPTLG) form a helical membrane-spanning segment. Residues 221–271 (IAACQVLIFREIHASLVPGPSERPGGRRRGRRTGSPGEGAHVSAAVAKTVR) are Cytoplasmic-facing. The segment at 240–259 (PSERPGGRRRGRRTGSPGEG) is disordered. A helical membrane pass occupies residues 272-293 (MTLVIVVVYVLCWAPFFLVQLW). Over 294 to 308 (AAWDPEAPLEGAPFV) the chain is Extracellular. A helical membrane pass occupies residues 309–328 (LLMLLASLNSCTNPWIYASF). At 329–371 (SSSVSSELRSLLCCARGRTPPSLGPQDESCTTASSSLAKDTSS) the chain is on the cytoplasmic side. Residues Cys-341 and Cys-342 are each lipidated (S-palmitoyl cysteine). The disordered stretch occupies residues 349-371 (PSLGPQDESCTTASSSLAKDTSS). Positions 356–371 (ESCTTASSSLAKDTSS) are enriched in polar residues.

This sequence belongs to the G-protein coupled receptor 1 family. Vasopressin/oxytocin receptor subfamily. Interacts with ARRDC4. Identified in a complex containing at least ARRDC4, V2R and HGS. Interacts with TMEM147. In terms of tissue distribution, kidney.

The protein localises to the cell membrane. Functionally, receptor for arginine vasopressin. The activity of this receptor is mediated by G proteins which activate adenylate cyclase. Involved in renal water reabsorption. This chain is Vasopressin V2 receptor (AVPR2), found in Homo sapiens (Human).